The primary structure comprises 264 residues: MVTMKDLLECGVHFGHQTRRWNPKTKKFIFGVRKNIHIIDLQKTLRYFRYTYNIVRDASAQGKSIMFVGTKKQANETLKEFAESIQVPYVNYRWLGGMLTNFSTIRKSVRKLEIIEEMENSGQIDLLTKKEKLMILRKKEKLDKYLGGVRHMKKIPDMIFVIDVAKEKIAVAEARKLHIPIVAPLDTNCDPDLVDYPIPGNDDAIRSIRLFCKEMSEAILEGRELMQEEIVHADENSEEIEFVSNEEKEEMLAEIQKEITQGAE.

Belongs to the universal ribosomal protein uS2 family.

This chain is Small ribosomal subunit protein uS2, found in Helicobacter pylori (strain P12).